Reading from the N-terminus, the 209-residue chain is Ribonuclease HII (209 aa).

In terms of domain architecture, RNase H type-2 spans 20-209 (DSEIGIDEVG…KSFLNKLNLI (190 aa)). The a divalent metal cation site is built by aspartate 26, glutamate 27, and aspartate 122.

It belongs to the RNase HII family. Mn(2+) is required as a cofactor. The cofactor is Mg(2+).

The protein resides in the cytoplasm. The enzyme catalyses Endonucleolytic cleavage to 5'-phosphomonoester.. Endonuclease that specifically degrades the RNA of RNA-DNA hybrids. The protein is Ribonuclease HII of Prochlorococcus marinus subsp. pastoris (strain CCMP1986 / NIES-2087 / MED4).